The following is a 132-amino-acid chain: Protein C10 (132 aa).

The residue at position 2 (A2) is an N-acetylalanine.

Belongs to the UPF0456 family.

The protein localises to the cytoplasm. In brain, may be required for corpus callosum development. The protein is Protein C10 of Bos taurus (Bovine).